A 689-amino-acid polypeptide reads, in one-letter code: DNA ligase (689 aa).

NAD(+)-binding positions include 40-44 (DAEYD), 89-90 (SL), and Glu-121. Lys-123 serves as the catalytic N6-AMP-lysine intermediate. The NAD(+) site is built by Arg-144, Glu-179, Lys-295, and Lys-319. Residues Cys-413, Cys-416, Cys-431, and Cys-437 each coordinate Zn(2+). In terms of domain architecture, BRCT spans 610 to 689 (REQSSLTGKI…AEWLTLVRDI (80 aa)).

This sequence belongs to the NAD-dependent DNA ligase family. LigA subfamily. Requires Mg(2+) as cofactor. Mn(2+) is required as a cofactor.

It catalyses the reaction NAD(+) + (deoxyribonucleotide)n-3'-hydroxyl + 5'-phospho-(deoxyribonucleotide)m = (deoxyribonucleotide)n+m + AMP + beta-nicotinamide D-nucleotide.. DNA ligase that catalyzes the formation of phosphodiester linkages between 5'-phosphoryl and 3'-hydroxyl groups in double-stranded DNA using NAD as a coenzyme and as the energy source for the reaction. It is essential for DNA replication and repair of damaged DNA. The chain is DNA ligase from Rickettsia bellii (strain OSU 85-389).